Consider the following 421-residue polypeptide: RNase J-like protein (421 aa).

The Zn(2+) site is built by His55, His57, Asp59, His60, His132, Asp153, and His389.

The protein belongs to the metallo-beta-lactamase superfamily. RNA-metabolizing metallo-beta-lactamase-like family. In terms of assembly, forms homodimers on heating to 60 degrees Celsius which may be the active form. The cofactor is Zn(2+).

With respect to regulation, inhibited by imidazole. Functionally, a 5'-3' exoribonuclease with a strong reference for 5'-monophosphorylated RNA and no endoribonuclease activty. The chain is RNase J-like protein from Methanocaldococcus jannaschii (strain ATCC 43067 / DSM 2661 / JAL-1 / JCM 10045 / NBRC 100440) (Methanococcus jannaschii).